The chain runs to 192 residues: Thiamine transporter ThiT (192 aa).

The next 6 helical transmembrane spans lie at 10 to 30, 31 to 51, 57 to 77, 81 to 101, 123 to 143, and 164 to 184; these read LIEIAIMTAAAVILDIVSGMF, LSMPQGGSVSIMMIPIFLISF, AGLTTGLLTGLVQIAIGNLFA, VQLLLDYIVAFAAIGISGCFA, AVFIGSLLRYAAHVISGAVFF, and YMVPSFIICAIVLCLLFMTAP.

It belongs to the vitamin uptake transporter (VUT/ECF) (TC 2.A.88) family. Thiamine transporter subfamily. As to quaternary structure, forms a stable energy-coupling factor (ECF) transporter complex composed of a membrane-embedded substrate-binding protein (S component), two ATP-binding proteins (A components) and a transmembrane protein (T component).

The protein localises to the cell membrane. Functionally, probably a thiamine-binding protein that interacts with the energy-coupling factor (ECF) ABC-transporter complex. Unlike classic ABC transporters this ECF transporter provides the energy necessary to transport a number of different substrates. The substrates themselves are bound by transmembrane, not extracytoplasmic soluble proteins. In Bacillus subtilis (strain 168), this protein is Thiamine transporter ThiT (thiT).